A 187-amino-acid chain; its full sequence is Biphenyl 2,3-dioxygenase subunit beta (187 aa).

This sequence belongs to the bacterial ring-hydroxylating dioxygenase beta subunit family. Heterohexamer consisting of three BphA1 subunits and three BphA2 subunits. The multicomponent biphenyl dioxygenase system is composed of a ferredoxin reductase (BphA4), a ferredoxin (BphA3), and a terminal oxygenase (BphA1A2).

The enzyme catalyses biphenyl + NADH + O2 + H(+) = (2R,3S)-3-phenylcyclohexa-3,5-diene-1,2-diol + NAD(+). It participates in xenobiotic degradation; biphenyl degradation; 2-hydroxy-2,4-pentadienoate and benzoate from biphenyl: step 1/4. Its function is as follows. Part of the oxygenase component of the biphenyl dioxygenase system that catalyzes the stereospecific dihydroxylation of the aromatic ring of biphenyl, yielding a dihydrodiol compound. Is likely involved in biphenyl degradation that allows growth of Rhodococcus sp. strain RHA1 on biphenyl as the sole source of carbon and energy. Can also use naphtalene and 4-chlorobiphenyl (4-CB) as substrates, as well as some polychlorinated biphenyls (PCB) such as 2,2'-dichlorobiphenyl, 2,3-dichlorobiphenyl and 2,5,2'-trichlorobiphenyl. Exhibits weak activity toward dibenzofuran and dibenzo-p-dioxin. Electrons are transferred from NADH to the [2Fe-2S] cluster in BphA1 via FAD of BphA4 and [2Fe-2S] cluster of BphA3. The sequence is that of Biphenyl 2,3-dioxygenase subunit beta from Rhodococcus jostii (strain RHA1).